The following is a 170-amino-acid chain: Nucleoside-triphosphatase THEP1 (170 aa).

Residues 7 to 14 and 98 to 105 contribute to the ATP site; these read GMPGVGKT and IIIIDELG.

This sequence belongs to the THEP1 NTPase family.

The catalysed reaction is a ribonucleoside 5'-triphosphate + H2O = a ribonucleoside 5'-diphosphate + phosphate + H(+). In terms of biological role, has nucleotide phosphatase activity towards ATP, GTP, CTP, TTP and UTP. May hydrolyze nucleoside diphosphates with lower efficiency. This is Nucleoside-triphosphatase THEP1 from Methanocaldococcus jannaschii (strain ATCC 43067 / DSM 2661 / JAL-1 / JCM 10045 / NBRC 100440) (Methanococcus jannaschii).